The following is a 407-amino-acid chain: Phosphopentomutase (407 aa).

6 residues coordinate Mn(2+): Asp10, Asp306, His311, Asp347, His348, and His359.

It belongs to the phosphopentomutase family. The cofactor is Mn(2+).

Its subcellular location is the cytoplasm. The enzyme catalyses 2-deoxy-alpha-D-ribose 1-phosphate = 2-deoxy-D-ribose 5-phosphate. It catalyses the reaction alpha-D-ribose 1-phosphate = D-ribose 5-phosphate. Its pathway is carbohydrate degradation; 2-deoxy-D-ribose 1-phosphate degradation; D-glyceraldehyde 3-phosphate and acetaldehyde from 2-deoxy-alpha-D-ribose 1-phosphate: step 1/2. Its function is as follows. Isomerase that catalyzes the conversion of deoxy-ribose 1-phosphate (dRib-1-P) and ribose 1-phosphate (Rib-1-P) to deoxy-ribose 5-phosphate (dRib-5-P) and ribose 5-phosphate (Rib-5-P), respectively. This chain is Phosphopentomutase, found in Cronobacter sakazakii (strain ATCC BAA-894) (Enterobacter sakazakii).